The sequence spans 305 residues: Glycine--tRNA ligase alpha subunit (305 aa).

This sequence belongs to the class-II aminoacyl-tRNA synthetase family. Tetramer of two alpha and two beta subunits.

It localises to the cytoplasm. It carries out the reaction tRNA(Gly) + glycine + ATP = glycyl-tRNA(Gly) + AMP + diphosphate. The chain is Glycine--tRNA ligase alpha subunit from Vibrio parahaemolyticus serotype O3:K6 (strain RIMD 2210633).